The primary structure comprises 226 residues: Thiamine-phosphate synthase (226 aa).

Residues 46 to 50 and Asp83 contribute to the 4-amino-2-methyl-5-(diphosphooxymethyl)pyrimidine site; that span reads QFRDK. The Mg(2+) site is built by Asp84 and Asp103. Ser122 contributes to the 4-amino-2-methyl-5-(diphosphooxymethyl)pyrimidine binding site. 149–151 provides a ligand contact to 2-[(2R,5Z)-2-carboxy-4-methylthiazol-5(2H)-ylidene]ethyl phosphate; sequence TQS. Position 152 (Lys152) interacts with 4-amino-2-methyl-5-(diphosphooxymethyl)pyrimidine. 2-[(2R,5Z)-2-carboxy-4-methylthiazol-5(2H)-ylidene]ethyl phosphate-binding positions include Gly181 and 201-202; that span reads IT.

The protein belongs to the thiamine-phosphate synthase family. The cofactor is Mg(2+).

It carries out the reaction 2-[(2R,5Z)-2-carboxy-4-methylthiazol-5(2H)-ylidene]ethyl phosphate + 4-amino-2-methyl-5-(diphosphooxymethyl)pyrimidine + 2 H(+) = thiamine phosphate + CO2 + diphosphate. It catalyses the reaction 2-(2-carboxy-4-methylthiazol-5-yl)ethyl phosphate + 4-amino-2-methyl-5-(diphosphooxymethyl)pyrimidine + 2 H(+) = thiamine phosphate + CO2 + diphosphate. The catalysed reaction is 4-methyl-5-(2-phosphooxyethyl)-thiazole + 4-amino-2-methyl-5-(diphosphooxymethyl)pyrimidine + H(+) = thiamine phosphate + diphosphate. It functions in the pathway cofactor biosynthesis; thiamine diphosphate biosynthesis; thiamine phosphate from 4-amino-2-methyl-5-diphosphomethylpyrimidine and 4-methyl-5-(2-phosphoethyl)-thiazole: step 1/1. Condenses 4-methyl-5-(beta-hydroxyethyl)thiazole monophosphate (THZ-P) and 2-methyl-4-amino-5-hydroxymethyl pyrimidine pyrophosphate (HMP-PP) to form thiamine monophosphate (TMP). The sequence is that of Thiamine-phosphate synthase from Haemophilus influenzae (strain ATCC 51907 / DSM 11121 / KW20 / Rd).